The chain runs to 292 residues: Bifunctional protein FolD (292 aa).

NADP(+) is bound by residues 165-167, S190, and T231; that span reads GRS.

It belongs to the tetrahydrofolate dehydrogenase/cyclohydrolase family. Homodimer.

It carries out the reaction (6R)-5,10-methylene-5,6,7,8-tetrahydrofolate + NADP(+) = (6R)-5,10-methenyltetrahydrofolate + NADPH. It catalyses the reaction (6R)-5,10-methenyltetrahydrofolate + H2O = (6R)-10-formyltetrahydrofolate + H(+). It participates in one-carbon metabolism; tetrahydrofolate interconversion. In terms of biological role, catalyzes the oxidation of 5,10-methylenetetrahydrofolate to 5,10-methenyltetrahydrofolate and then the hydrolysis of 5,10-methenyltetrahydrofolate to 10-formyltetrahydrofolate. The chain is Bifunctional protein FolD from Arthrobacter globiformis.